Here is a 251-residue protein sequence, read N- to C-terminus: S-acyl fatty acid synthase thioesterase, medium chain (251 aa).

Catalysis depends on residues Ser-90 and His-226.

It belongs to the thioesterase family.

The enzyme catalyses (9Z)-octadecenoyl-[ACP] + H2O = (9Z)-octadecenoate + holo-[ACP] + H(+). Its function is as follows. In fatty acid biosynthesis chain termination and release of the free fatty acid product is achieved by hydrolysis of the thio ester by a thioesterase I, a component of the fatty acid synthetase complex. The chain length of the released fatty acid is usually C16. However, in the mammary glands of non-ruminant mammals, and in the uropygial gland of certain waterfowl there exists a second thioesterase which releases medium-chain length fatty acids (C8 to C2). The polypeptide is S-acyl fatty acid synthase thioesterase, medium chain (Anas platyrhynchos (Mallard)).